A 265-amino-acid chain; its full sequence is Thymidylate synthase (265 aa).

DUMP is bound at residue arginine 21. Residue histidine 51 participates in (6R)-5,10-methylene-5,6,7,8-tetrahydrofolate binding. 127-128 (RR) is a dUMP binding site. The active-site Nucleophile is cysteine 147. Residues 167 to 170 (RSAD), asparagine 178, and 208 to 210 (HLY) each bind dUMP. Residue aspartate 170 participates in (6R)-5,10-methylene-5,6,7,8-tetrahydrofolate binding. (6R)-5,10-methylene-5,6,7,8-tetrahydrofolate is bound at residue serine 264.

Belongs to the thymidylate synthase family. Bacterial-type ThyA subfamily. As to quaternary structure, homodimer.

The protein localises to the cytoplasm. The enzyme catalyses dUMP + (6R)-5,10-methylene-5,6,7,8-tetrahydrofolate = 7,8-dihydrofolate + dTMP. It functions in the pathway pyrimidine metabolism; dTTP biosynthesis. In terms of biological role, catalyzes the reductive methylation of 2'-deoxyuridine-5'-monophosphate (dUMP) to 2'-deoxythymidine-5'-monophosphate (dTMP) while utilizing 5,10-methylenetetrahydrofolate (mTHF) as the methyl donor and reductant in the reaction, yielding dihydrofolate (DHF) as a by-product. This enzymatic reaction provides an intracellular de novo source of dTMP, an essential precursor for DNA biosynthesis. In Neisseria gonorrhoeae, this protein is Thymidylate synthase.